Here is a 338-residue protein sequence, read N- to C-terminus: RNA 3'-terminal phosphate cyclase (338 aa).

ATP-binding positions include Q103 and 283 to 287; that span reads YLADQ. The active-site Tele-AMP-histidine intermediate is H308.

The protein belongs to the RNA 3'-terminal cyclase family. Type 1 subfamily.

The protein localises to the cytoplasm. It catalyses the reaction a 3'-end 3'-phospho-ribonucleotide-RNA + ATP = a 3'-end 2',3'-cyclophospho-ribonucleotide-RNA + AMP + diphosphate. In terms of biological role, catalyzes the conversion of 3'-phosphate to a 2',3'-cyclic phosphodiester at the end of RNA. The mechanism of action of the enzyme occurs in 3 steps: (A) adenylation of the enzyme by ATP; (B) transfer of adenylate to an RNA-N3'P to produce RNA-N3'PP5'A; (C) and attack of the adjacent 2'-hydroxyl on the 3'-phosphorus in the diester linkage to produce the cyclic end product. The biological role of this enzyme is unknown but it is likely to function in some aspects of cellular RNA processing. The chain is RNA 3'-terminal phosphate cyclase from Escherichia coli O81 (strain ED1a).